Consider the following 619-residue polypeptide: uncharacterized protein (619 aa).

Residues 1–21 (MKKLIAIIAVAAVVIAGFVFT) form the signal peptide.

This is an uncharacterized protein from Archaeoglobus fulgidus (strain ATCC 49558 / DSM 4304 / JCM 9628 / NBRC 100126 / VC-16).